The primary structure comprises 186 residues: Threonylcarbamoyl-AMP synthase (186 aa).

A YrdC-like domain is found at 5–186 (LLTIKAAAKL…WEAQTQKRLR (182 aa)).

Belongs to the SUA5 family. TsaC subfamily.

Its subcellular location is the cytoplasm. The enzyme catalyses L-threonine + hydrogencarbonate + ATP = L-threonylcarbamoyladenylate + diphosphate + H2O. Required for the formation of a threonylcarbamoyl group on adenosine at position 37 (t(6)A37) in tRNAs that read codons beginning with adenine. Catalyzes the conversion of L-threonine, HCO(3)(-)/CO(2) and ATP to give threonylcarbamoyl-AMP (TC-AMP) as the acyladenylate intermediate, with the release of diphosphate. The sequence is that of Threonylcarbamoyl-AMP synthase from Hydrogenovibrio crunogenus (strain DSM 25203 / XCL-2) (Thiomicrospira crunogena).